We begin with the raw amino-acid sequence, 448 residues long: Asparagine--tRNA ligase (448 aa).

It belongs to the class-II aminoacyl-tRNA synthetase family. In terms of assembly, homodimer.

The protein localises to the cytoplasm. It carries out the reaction tRNA(Asn) + L-asparagine + ATP = L-asparaginyl-tRNA(Asn) + AMP + diphosphate + H(+). The chain is Asparagine--tRNA ligase from Streptococcus thermophilus (strain ATCC BAA-250 / LMG 18311).